Consider the following 129-residue polypeptide: uncharacterized protein (129 aa).

The interval 1-129 (MWLWQDIQCC…HTSNGRTGDL (129 aa)) is disordered. The segment covering 87–100 (KGADTRRLPRETRP) has biased composition (basic and acidic residues). The segment covering 119–129 (PHTSNGRTGDL) has biased composition (polar residues).

This is an uncharacterized protein from Homo sapiens (Human).